A 561-amino-acid polypeptide reads, in one-letter code: MKRYTIGIDYGTESGRAVLVDLENGAEVAEHVTPYAHGVIDQCLPDSGRSLEPEWALQHPGDYLDVLRLSVPKVVEIADISASQVIGIGIDFTACTMLPIDKHGDPLCFDPQLAGRPHSWVKLWKHHAAQDEADEINRIAEERKEAFLARYGGKYSSEWMVSKIWQIFNEDPDMFEKADAFLEATDWVVAQLTGTIVRNSCTAGYKAMWHKRDGYPDDSFFAALDPGLAQLTTTKLRGDILAPGQRAGGLTAEMAETLGLKPGTAVAVGNVDAHVAVPAAGVVTPGKMVMVMGTSICHLVLAKEEREVEGMCGVVEDGIVPGYFGYEAGQSAVGDIFAWLMKHGIPADLKQEAEQAGKPLHSLLEEKAAAYRPGETGLLALDWWNGNRSTLVDANLTGLILGYTLQTKAEELYRTLLEATAFGTKKIIDAFRDSGVEVNVLYACGGLPQKNELLMQIYADVTNLEIKVAASKQTPALGAAMYASVAAGDEAGGYETIFAAAEKMAHTKARSFKPNHENVRLYQALYEEYSKLHDYFGRGENDVMKTLKQLRSRAKGGAVHA.

The protein belongs to the ribulokinase family.

The enzyme catalyses D-ribulose + ATP = D-ribulose 5-phosphate + ADP + H(+). The catalysed reaction is L-ribulose + ATP = L-ribulose 5-phosphate + ADP + H(+). The protein operates within carbohydrate degradation; L-arabinose degradation via L-ribulose; D-xylulose 5-phosphate from L-arabinose (bacterial route): step 2/3. This Shouchella clausii (strain KSM-K16) (Alkalihalobacillus clausii) protein is Ribulokinase.